A 143-amino-acid polypeptide reads, in one-letter code: MKSYMAKPEEVKRKWFVIDAEGKVLGRLASQIAKILMGKHKPTYTPHVDTGDFVIVLNAEKIVLTGNKLEDKYYKYYTGYPGGLKEVQYKKLMQTKPEFVIYHAVKGMLPKNRLGRRMIKRLKVYRGSEHKHQAQKPEKLDIE.

Belongs to the universal ribosomal protein uL13 family. As to quaternary structure, part of the 50S ribosomal subunit.

Its function is as follows. This protein is one of the early assembly proteins of the 50S ribosomal subunit, although it is not seen to bind rRNA by itself. It is important during the early stages of 50S assembly. In Thermoanaerobacter pseudethanolicus (strain ATCC 33223 / 39E) (Clostridium thermohydrosulfuricum), this protein is Large ribosomal subunit protein uL13.